Consider the following 479-residue polypeptide: GDP-fucose protein O-fucosyltransferase 3 (479 aa).

At 1–8 (MVRIQRRK) the chain is on the cytoplasmic side. Residues 9–31 (LLASCLCVTATVFLLVTLQVMVE) traverse the membrane as a helical; Signal-anchor for type II membrane protein segment. At 32-479 (LGKFERKEFK…QEFWGLVFKD (448 aa)) the chain is on the lumenal side. 2 N-linked (GlcNAc...) asparagine glycosylation sites follow: Asn110 and Asn168. An intrachain disulfide couples Cys389 to Cys392.

Belongs to the glycosyltransferase 10 family. As to expression, expressed in lung, digestive tract, gall bladder, placenta, kidney, uterus and brain. Not detected in spleen, heart, muscle, liver and pancreas.

The protein resides in the endoplasmic reticulum membrane. It localises to the golgi apparatus membrane. The protein localises to the golgi apparatus. Its subcellular location is the lysosome. The enzyme catalyses L-threonyl-[protein] + GDP-beta-L-fucose = 3-O-(alpha-L-fucosyl)-L-threonyl-[protein] + GDP + H(+). It carries out the reaction L-seryl-[protein] + GDP-beta-L-fucose = 3-O-(alpha-L-fucosyl)-L-seryl-[protein] + GDP + H(+). It functions in the pathway protein modification; protein glycosylation. Functionally, protein O-fucosyltransferase that specifically catalyzes O-fucosylation of serine or threonine residues in EMI domains of target proteins, such as MMRN1, MMRN2 and EMID1. Attaches fucose through an O-glycosidic linkage. O-fucosylation of EMI domain-containing proteins may be required for facilitating protein folding and secretion. May also show alpha-(1,3)-fucosyltransferase activity toward the innermost N-acetyl glucosamine (GlcNAc) residue in biantennary N-glycan acceptors. However, this was tested with a library of synthetic substrates and this activity is unsure in vivo. May be involved in biosynthesis of Lewis X-carrying biantennary N-glycans that regulate neuron stem cell self-renewal during brain development. This Homo sapiens (Human) protein is GDP-fucose protein O-fucosyltransferase 3.